The chain runs to 514 residues: MVKMGEVWTNTGSALASLVFIYTIFERFFPYRLREHFEPLAQSLIGFIYPYIQITFHEYSGERFKRSDVYDAIQSYLSKDSSSRAKKLTANTIKGNKSIILSMDDHEEITDEFQGVKVWWQSKKHQSESRAISFYPKADESRFYMLKFHRRDREVITKKYLNHVISEGKTIEVKNRERKLYSNNPSQNWSGYKQTKWSHVTFEHPATFDTLAMEYKKKEEIKNDLIKFSNSKDYYKKIGKAWKRGYLLFGPPGTGKSTMIAAMANLLEYDVYDLELTTVKDNTELRRLLIETSGKSIIVIEDIDCSLDLTGQRKQKKDEEEDEDETSPIEKQMKKDQGENKGSKVTLSGLLNFIDGLWSACGGERIIVFTTNFIDKLDPALIRKGRMDKHIEMSYCGFEAFKVLANNYLDAKEEDDNELFDEIKRLLEVEEIKMTPADVGENLLKKSEVETKEICLKRLIEALKEEKEEAKRRIEDEEKKKKEEEEIKRKKREEKKIKKEEKEEKEENETTMKD.

The helical transmembrane segment at 7-24 threads the bilayer; sequence VWTNTGSALASLVFIYTI. An ATP-binding site is contributed by 250 to 257; the sequence is GPPGTGKS. Disordered stretches follow at residues 311–342 and 467–514; these read GQRKQKKDEEEDEDETSPIEKQMKKDQGENKG and KEEA…TMKD. Basic and acidic residues-rich tracts occupy residues 331 to 342 and 467 to 502; these read KQMKKDQGENKG and KEEAKRRIEDEEKKKKEEEEIKRKKREEKKIKKEEK.

Belongs to the AAA ATPase family. BCS1 subfamily. It depends on Mg(2+) as a cofactor. In terms of tissue distribution, expressed in seeds, specifically in the embryo.

The protein localises to the mitochondrion membrane. The enzyme catalyses ATP + H2O = ADP + phosphate + H(+). In terms of biological role, required to regulate morphology and anatomy during seed maturation. This is AAA-ATPase ASD, mitochondrial (AATP1) from Arabidopsis thaliana (Mouse-ear cress).